Consider the following 210-residue polypeptide: Orotate phosphoribosyltransferase (210 aa).

Residues Arg-97, Lys-101, His-103, and 123-131 (EDLISTGGS) contribute to the 5-phospho-alpha-D-ribose 1-diphosphate site. Ser-127 serves as a coordination point for orotate.

This sequence belongs to the purine/pyrimidine phosphoribosyltransferase family. PyrE subfamily. As to quaternary structure, homodimer. It depends on Mg(2+) as a cofactor.

The enzyme catalyses orotidine 5'-phosphate + diphosphate = orotate + 5-phospho-alpha-D-ribose 1-diphosphate. It participates in pyrimidine metabolism; UMP biosynthesis via de novo pathway; UMP from orotate: step 1/2. Catalyzes the transfer of a ribosyl phosphate group from 5-phosphoribose 1-diphosphate to orotate, leading to the formation of orotidine monophosphate (OMP). This Porphyromonas gingivalis (strain ATCC BAA-308 / W83) protein is Orotate phosphoribosyltransferase.